We begin with the raw amino-acid sequence, 411 residues long: Prophage integrase IntR (411 aa).

Positions 81-176 (KTFGELCDIW…LLCSLLRFAY (96 aa)) constitute a Core-binding (CB) domain. The region spanning 197–404 (IKPDPLSKTE…IDDMNDEQIA (208 aa)) is the Tyr recombinase domain. Residues Arg-231, Lys-266, Arg-358, and His-381 contribute to the active site. The active-site O-(3'-phospho-DNA)-tyrosine intermediate is Tyr-391.

The protein belongs to the 'phage' integrase family.

Functionally, integrase is necessary for integration of the phage into the host genome by site-specific recombination. In conjunction with excisionase, integrase is also necessary for excision of the prophage from the host genome. This Escherichia coli (strain K12) protein is Prophage integrase IntR (intR).